The sequence spans 91 residues: Large ribosomal subunit protein bL28 (91 aa).

This sequence belongs to the bacterial ribosomal protein bL28 family.

The protein is Large ribosomal subunit protein bL28 of Protochlamydia amoebophila (strain UWE25).